The following is a 2126-amino-acid chain: Polycystin family receptor for egg jelly (2126 aa).

A signal peptide spans 1–18 (MWPGPALLLLGLGLGLGS). At 19–1068 (QPPPTGPRGL…AIISNLTQNP (1050 aa)) the chain is on the extracellular side. The interval 20–71 (PPPTGPRGLPGVLRGAPGLGQGAESSVRGGDTGGLSPRAAPRHASPTPPRRC) is disordered. Asn-84, Asn-94, Asn-129, Asn-192, Asn-243, Asn-325, Asn-571, Asn-761, Asn-774, Asn-807, Asn-849, Asn-888, Asn-960, and Asn-1063 each carry an N-linked (GlcNAc...) asparagine glycan. The 696-residue stretch at 102 to 797 (CIMQPVKINR…SMMFCEFADD (696 aa)) folds into the REJ domain. The chain crosses the membrane as a helical span at residues 1069 to 1089 (ATFLAVLFIMILYAILAFWAL). At 1090-1273 (HRDVIDLYFR…VPKPFNRLQR (184 aa)) the chain is on the cytoplasmic side. Residues 1114–1231 (LCYLVTIFTG…TLDATFSVTN (118 aa)) enclose the PLAT domain. Residues 1274–1294 (LSCCLAMLLSSLVCNIMFFNL) form a helical membrane-spanning segment. The Extracellular segment spans residues 1295–1311 (NQKEKIESRHMHIIRSM). The helical transmembrane segment at 1312 to 1332 (LIGIESVVITIPVQLLITFFF) threads the bilayer. The Cytoplasmic portion of the chain corresponds to 1333 to 1449 (TYSQKNLKMN…KTQIILPRWC (117 aa)). Residues 1379–1431 (RAAVSTSAPEEKEAFETSQKHEKADTQMSNKNSSNNNQEASEGVPPKAFSSQP) are disordered. Basic and acidic residues predominate over residues 1387-1403 (PEEKEAFETSQKHEKAD). A helical transmembrane segment spans residues 1450-1470 (VYIAWFLVFATSGISSFFIVF). The Extracellular portion of the chain corresponds to 1471–1483 (YGVTYGYAKSIEW). The helical transmembrane segment at 1484–1504 (LFASFCSFCQSVFLVQPCNIL) threads the bilayer. At 1505–1580 (LRSGTRSYKP…RRENRIRRRS (76 aa)) the chain is on the cytoplasmic side. Residues 1581-1601 (FLFLSYLVTHFIFLTLLLLLI) form a helical membrane-spanning segment. Residues 1602 to 1838 (FSLRHNDSFY…DFNRKTSSEI (237 aa)) lie on the Extracellular side of the membrane. Residues Asn-1607, Asn-1676, Asn-1766, and Asn-1817 are each glycosylated (N-linked (GlcNAc...) asparagine). The chain crosses the membrane as a helical span at residues 1839 to 1859 (YLYAAILIFFCAYVVDEGYII). Residues 1860–1875 (RQERASYIRSVYNLLN) lie on the Cytoplasmic side of the membrane. The chain crosses the membrane as a helical span at residues 1876 to 1896 (FSLKCMFALLIVLFFWKYFLA). The Extracellular segment spans residues 1897–1918 (TKMVQLYLADPEAFIPFHAVSR). The helical transmembrane segment at 1919–1939 (VDHFMRIILAFLLFLTILKTL) threads the bilayer. Over 1940–1964 (RYSRFFYNVRLAQKAIQAALPGICH) the chain is Cytoplasmic. A helical transmembrane segment spans residues 1965–1985 (TALVVSIYSFMYVAFGYLVFG). The Extracellular portion of the chain corresponds to 1986–2019 (QHEWNYSNMIHATQTIFSYCVSAFQNTEFSGNKV). The helical transmembrane segment at 2020-2040 (LGVLFLSSFMLVMICIFINLF) threads the bilayer. The Cytoplasmic segment spans residues 2041-2126 (QAVILSAYDE…NGKKMIYLVV (86 aa)).

It belongs to the polycystin family. In terms of tissue distribution, exclusively expressed in testis.

It localises to the cell membrane. It is found in the cytoplasmic vesicle. The protein resides in the secretory vesicle. The protein localises to the acrosome membrane. Its subcellular location is the nucleus. Its function is as follows. Testis-specific protein that controls sperm transport and the timing of zona pellucida-evoked exocytosis of the sperm acrosome. This is Polycystin family receptor for egg jelly (Pkdrej) from Mus musculus (Mouse).